The following is a 261-amino-acid chain: Major biofilm matrix component (261 aa).

Residues 1-27 form the signal peptide; it reads MGMKKKLSLGVASAALGLALVGGGTWA. Residues 241 to 261 are disordered; sequence DHTDKDGYVKENEKAHSEDKN.

It belongs to the peptidase M73 family. As to quaternary structure, forms fibers. Fibers have variable length and are 10-15 nm width. Interacts with obg (AC P20964) in pull-down experiments.

Its subcellular location is the secreted. The protein localises to the forespore intermembrane space. Its function is as follows. TasA is the major protein component of the biofilm extracellular matrix. It forms amyloid fibers that bind cells together in the biofilm. Exhibits an antibacterial activity against a variety of Gram-positive and Gram-negative bacteria. In laboratory strains, is also involved in proper spore coat assembly. The chain is Major biofilm matrix component from Bacillus subtilis (strain 168).